Consider the following 581-residue polypeptide: Pre-mRNA 3'-end-processing factor FIP1 (581 aa).

2 stretches are compositionally biased toward basic and acidic residues: residues 1 to 10 (MSAGEVERLV) and 32 to 42 (VHVHSDLAKDL). 3 disordered regions span residues 1-95 (MSAG…EDDV), 211-282 (TVQQ…ESPD), and 320-581 (RSAT…APAE). Positions 1 to 110 (MSAGEVERLV…DIKTGAPQYG (110 aa)) are sufficient for interaction with PAPOLA. The interval 1–332 (MSAGEVERLV…TEVDNNFSKP (332 aa)) is necessary for stimulating PAPOLA activity. 2 stretches are compositionally biased toward acidic residues: residues 43-54 (DENEVERPEEEN) and 80-94 (TEDDSDSDSDDDEDD). Ser84, Ser86, and Ser88 each carry phosphoserine. Positions 136–219 (KGVDLDAPGS…ITVQQGRTGN (84 aa)) are sufficient for interaction with CPSF4. A compositionally biased stretch (low complexity) spans 247–267 (SRNSTSSQSQTSTASRKASSS). Positions 271–282 (WQDRYGRAESPD) are enriched in basic and acidic residues. A Phosphoserine modification is found at Ser280. Positions 320-330 (RSATEVDNNFS) are enriched in polar residues. Residues 331–389 (KPPPFFPPGAPPTHLPPPPFLPPPPTVSTAPPLIPPPGIPITVPPPGFPPPPGAPPPSL) are compositionally biased toward pro residues. The residue at position 411 (Tyr411) is a Phosphotyrosine. Polar residues predominate over residues 419–435 (LTSSAPSWPSLVDTTKQ). The interval 428-581 (SLVDTTKQWD…QESTEAAPAE (154 aa)) is sufficient for interaction with CPSF1 and CSTF3. The span at 439 to 479 (YARREKDRDRDRERDRDRERERDRDRERERTRERERERDHS) shows a compositional bias: basic and acidic residues. The tract at residues 442 to 477 (REKDRDRDRERDRDRERERDRDRERERTRERERERD) is arg/Asp/Glu-rich domain. The sufficient for interaction with AHCYL1 stretch occupies residues 478–535 (HSPTPSVFNSDEERYRYREYAERGYERHRASREKEERHRERRHREKEETRHKSSRSNS). Ser479 bears the Phosphoserine mark. A Phosphothreonine modification is found at Thr481. Ser483 and Ser487 each carry phosphoserine. Over residues 488–515 (DEERYRYREYAERGYERHRASREKEERH) the composition is skewed to basic and acidic residues. Basic residues predominate over residues 529 to 538 (KSSRSNSRRR). Phosphoserine is present on Ser541. Residues 547-557 (HRRHKHKKSKR) show a composition bias toward basic residues.

The protein belongs to the FIP1 family. In terms of assembly, component of the cleavage and polyadenylation specificity factor (CPSF) complex, composed of CPSF1, CPSF2, CPSF3, CPSF4 and FIP1L1. Found in a complex with CPSF1, FIP1L1 and PAPOLA. Interacts with CPSF1, CPSF4, CSTF2 and CSTF3. Interacts with AHCYL1 (when phosphorylated); the interaction is direct and associates AHCYL1 with the CPSF complex and RNA. Interacts with PAPOLA; the interaction seems to be increased by the interaction with AHCYL1. Interacts with NUDT21/CPSF5; this interaction occurs in a RNA sequence-specific manner. Interacts (preferentially via unphosphorylated form and Arg/Glu/Asp-rich domain) with CPSF6 (via Arg/Ser-rich domain); this interaction mediates, at least in part, the interaction between the CFIm and CPSF complexes and may be inhibited by CPSF6 hyper-phosphorylation. Interacts (preferentially via unphosphorylated form and Arg/Asp/Glu-rich domain) with CPSF7 (via Arg/Ser-rich domain); this interaction mediates, at least in part, the interaction between the CFIm and CPSF complexes and may be inhibited by CPSF7 hyper-phosphorylation.

It localises to the nucleus. Its function is as follows. Component of the cleavage and polyadenylation specificity factor (CPSF) complex that plays a key role in pre-mRNA 3'-end formation, recognizing the AAUAAA signal sequence and interacting with poly(A) polymerase and other factors to bring about cleavage and poly(A) addition. FIP1L1 contributes to poly(A) site recognition and stimulates poly(A) addition. Binds to U-rich RNA sequence elements surrounding the poly(A) site. May act to tether poly(A) polymerase to the CPSF complex. In Mus musculus (Mouse), this protein is Pre-mRNA 3'-end-processing factor FIP1 (Fip1l1).